Here is a 378-residue protein sequence, read N- to C-terminus: Protein RecA (378 aa).

Residue 66–73 (GPESSGKT) participates in ATP binding. The interval 333 to 378 (PDAAKAEAATDAAAAADTAGTDDAAKSVPAPASKTAKATKATAVKS) is disordered. Positions 338–378 (AEAATDAAAAADTAGTDDAAKSVPAPASKTAKATKATAVKS) are enriched in low complexity.

The protein belongs to the RecA family.

The protein resides in the cytoplasm. In terms of biological role, can catalyze the hydrolysis of ATP in the presence of single-stranded DNA, the ATP-dependent uptake of single-stranded DNA by duplex DNA, and the ATP-dependent hybridization of homologous single-stranded DNAs. It interacts with LexA causing its activation and leading to its autocatalytic cleavage. This chain is Protein RecA, found in Streptomyces venezuelae (strain ATCC 10712 / CBS 650.69 / DSM 40230 / JCM 4526 / NBRC 13096 / PD 04745).